Here is a 415-residue protein sequence, read N- to C-terminus: Adenylosuccinate synthetase (415 aa).

GTP contacts are provided by residues 11–17 (GDEGKGK) and 39–41 (GHT). Asp12 acts as the Proton acceptor in catalysis. The Mg(2+) site is built by Asp12 and Gly39. Residues 12-15 (DEGK), 37-40 (NAGH), Thr124, Arg138, Gln218, Thr233, and Arg297 each bind IMP. His40 serves as the catalytic Proton donor. A substrate-binding site is contributed by 293 to 299 (TTTGRAR). GTP contacts are provided by residues Arg299, 325–327 (KLD), and 403–405 (STS).

It belongs to the adenylosuccinate synthetase family. In terms of assembly, homodimer. It depends on Mg(2+) as a cofactor.

The protein localises to the cytoplasm. It carries out the reaction IMP + L-aspartate + GTP = N(6)-(1,2-dicarboxyethyl)-AMP + GDP + phosphate + 2 H(+). Its pathway is purine metabolism; AMP biosynthesis via de novo pathway; AMP from IMP: step 1/2. In terms of biological role, plays an important role in the de novo pathway of purine nucleotide biosynthesis. Catalyzes the first committed step in the biosynthesis of AMP from IMP. The sequence is that of Adenylosuccinate synthetase from Helicobacter hepaticus (strain ATCC 51449 / 3B1).